The sequence spans 249 residues: tRNA pseudouridine synthase A (249 aa).

The active-site Nucleophile is D52. Y111 serves as a coordination point for substrate.

This sequence belongs to the tRNA pseudouridine synthase TruA family. As to quaternary structure, homodimer.

It carries out the reaction uridine(38/39/40) in tRNA = pseudouridine(38/39/40) in tRNA. Its function is as follows. Formation of pseudouridine at positions 38, 39 and 40 in the anticodon stem and loop of transfer RNAs. The polypeptide is tRNA pseudouridine synthase A (Brachyspira hyodysenteriae (strain ATCC 49526 / WA1)).